The primary structure comprises 156 residues: 6,7-dimethyl-8-ribityllumazine synthase (156 aa).

5-amino-6-(D-ribitylamino)uracil-binding positions include phenylalanine 22, 57–59 (AYE), and 81–83 (SVI). 86-87 (GT) serves as a coordination point for (2S)-2-hydroxy-3-oxobutyl phosphate. Catalysis depends on histidine 89, which acts as the Proton donor. Phenylalanine 114 is a 5-amino-6-(D-ribitylamino)uracil binding site. A (2S)-2-hydroxy-3-oxobutyl phosphate-binding site is contributed by arginine 128.

Belongs to the DMRL synthase family. Forms an icosahedral capsid composed of 60 subunits, arranged as a dodecamer of pentamers.

It carries out the reaction (2S)-2-hydroxy-3-oxobutyl phosphate + 5-amino-6-(D-ribitylamino)uracil = 6,7-dimethyl-8-(1-D-ribityl)lumazine + phosphate + 2 H2O + H(+). It participates in cofactor biosynthesis; riboflavin biosynthesis; riboflavin from 2-hydroxy-3-oxobutyl phosphate and 5-amino-6-(D-ribitylamino)uracil: step 1/2. Catalyzes the formation of 6,7-dimethyl-8-ribityllumazine by condensation of 5-amino-6-(D-ribitylamino)uracil with 3,4-dihydroxy-2-butanone 4-phosphate. This is the penultimate step in the biosynthesis of riboflavin. The chain is 6,7-dimethyl-8-ribityllumazine synthase from Photobacterium leiognathi.